The sequence spans 383 residues: Probable acyl-CoA dehydrogenase YdiO (383 aa).

Belongs to the acyl-CoA dehydrogenase family. Requires FAD as cofactor.

The enzyme catalyses a 2,3-saturated acyl-CoA + A = a 2,3-dehydroacyl-CoA + AH2. This is Probable acyl-CoA dehydrogenase YdiO (ydiO) from Escherichia coli O157:H7.